The primary structure comprises 81 residues: Cortexin-3 (81 aa).

A helical transmembrane segment spans residues 29–49; that stretch reads MTFVFVILLFIFLGILIVRCF.

Belongs to the cortexin family.

Its subcellular location is the membrane. This chain is Cortexin-3 (CTXN3), found in Homo sapiens (Human).